A 208-amino-acid polypeptide reads, in one-letter code: Thymidylate kinase (208 aa).

ATP is bound at residue 10 to 17 (GPEGSGKT).

The protein belongs to the thymidylate kinase family.

It catalyses the reaction dTMP + ATP = dTDP + ADP. Functionally, phosphorylation of dTMP to form dTDP in both de novo and salvage pathways of dTTP synthesis. This is Thymidylate kinase from Bacillus cereus (strain Q1).